Here is a 126-residue protein sequence, read N- to C-terminus: Anti-adapter protein IraD (126 aa).

This sequence belongs to the GpW/Gp25 family. IraD subfamily. In terms of assembly, interacts with RssB.

Its subcellular location is the cytoplasm. In terms of biological role, inhibits RpoS proteolysis by regulating RssB activity, thereby increasing the stability of the sigma stress factor RpoS during oxidative stress. Its effect on RpoS stability is due to its interaction with RssB, which probably blocks the interaction of RssB with RpoS, and the consequent delivery of the RssB-RpoS complex to the ClpXP protein degradation pathway. This chain is Anti-adapter protein IraD, found in Salmonella arizonae (strain ATCC BAA-731 / CDC346-86 / RSK2980).